Here is a 170-residue protein sequence, read N- to C-terminus: ATP synthase subunit b (170 aa).

The helical transmembrane segment at 30 to 50 (FFFVLAIFLVVLAVIGTFVVP) threads the bilayer.

Belongs to the ATPase B chain family. In terms of assembly, F-type ATPases have 2 components, F(1) - the catalytic core - and F(0) - the membrane proton channel. F(1) has five subunits: alpha(3), beta(3), gamma(1), delta(1), epsilon(1). F(0) has three main subunits: a(1), b(2) and c(10-14). The alpha and beta chains form an alternating ring which encloses part of the gamma chain. F(1) is attached to F(0) by a central stalk formed by the gamma and epsilon chains, while a peripheral stalk is formed by the delta and b chains.

It is found in the cell membrane. In terms of biological role, f(1)F(0) ATP synthase produces ATP from ADP in the presence of a proton or sodium gradient. F-type ATPases consist of two structural domains, F(1) containing the extramembraneous catalytic core and F(0) containing the membrane proton channel, linked together by a central stalk and a peripheral stalk. During catalysis, ATP synthesis in the catalytic domain of F(1) is coupled via a rotary mechanism of the central stalk subunits to proton translocation. Component of the F(0) channel, it forms part of the peripheral stalk, linking F(1) to F(0). In Mycobacterium ulcerans (strain Agy99), this protein is ATP synthase subunit b.